We begin with the raw amino-acid sequence, 424 residues long: Myb family transcription factor RLI1 (424 aa).

Positions 144-165 (RPQKRDSGERTPLPPPSQQQHQ) are disordered. Positions 238-298 (APSKTRIRWT…HLQKYRIAKY (61 aa)) constitute an HTH myb-type domain. The H-T-H motif DNA-binding region spans 269 to 294 (PKGILKLMNSDGLTIYHIKSHLQKYR). The LHEQLE motif lies at 342 to 347 (LHEQLE). A coiled-coil region spans residues 342 to 391 (LHEQLEIQRNLQLRIEEQGKRLQKMFEDQLKASRSVMEPQELDDVVAFAA).

The protein belongs to the MYB-CC family. As to quaternary structure, homodimer. Interacts with PHR2 in the nucleus. Interacts with SPX1 and SPX2 in the nucleus; these interactions prevent binding to the promoters of target genes, thus regulating negatively leaf inclination in response to phosphate (Pi) starvation.

The protein resides in the nucleus. Transcription factor binding to specific DNA sequences of target genes promoters, such as the motif R1BS 5'-NAKATNCN-3' and the motif P1BS 5'-GNATATNC-3' to trigger their expression. Nitrate-induced component involved in modulating phosphate (Pi) response and homeostasis together with PHR2; activates directly the expression of Pi starvation-induced (PSI) genes upon nitrate disponibility, thus triggering the nitrate-induced phosphate response (NIPR) promoting Pi uptake activity. Involved in the shoot architecture; positively regulates leaf inclination by affecting lamina joint cell elongation via the direct promotion of ILI4/BU1 and BC1 genes expression, especially in response to phosphate (Pi) availability. Regulates both brassinolide (BL) biosynthesis and signaling by directly activating BL-biosynthesis and signaling genes. The polypeptide is Myb family transcription factor RLI1 (Oryza sativa subsp. indica (Rice)).